We begin with the raw amino-acid sequence, 144 residues long: Transcriptional regulator MraZ (144 aa).

2 consecutive SpoVT-AbrB domains span residues 5–47 and 77–120; these read TYTP…PRAE and TDEQ…DAQA.

This sequence belongs to the MraZ family. Forms oligomers.

The protein resides in the cytoplasm. It localises to the nucleoid. In Mycolicibacterium gilvum (strain PYR-GCK) (Mycobacterium gilvum (strain PYR-GCK)), this protein is Transcriptional regulator MraZ.